The chain runs to 185 residues: Elongation factor P (185 aa).

Belongs to the elongation factor P family.

The protein resides in the cytoplasm. Its pathway is protein biosynthesis; polypeptide chain elongation. Involved in peptide bond synthesis. Stimulates efficient translation and peptide-bond synthesis on native or reconstituted 70S ribosomes in vitro. Probably functions indirectly by altering the affinity of the ribosome for aminoacyl-tRNA, thus increasing their reactivity as acceptors for peptidyl transferase. This is Elongation factor P from Aromatoleum aromaticum (strain DSM 19018 / LMG 30748 / EbN1) (Azoarcus sp. (strain EbN1)).